Here is a 103-residue protein sequence, read N- to C-terminus: OMEGA-ectatommitoxin(02)-Rm1d (103 aa).

The N-terminal stretch at 1 to 30 is a signal peptide; the sequence is MKDSYISIVIAYLMVTFILVSSMPIEGEKR. 3 disulfides stabilise this stretch: cysteine 39–cysteine 54, cysteine 49–cysteine 70, and cysteine 72–cysteine 81. An EGF-like domain is found at 43-82; that stretch reads LNDENYCFNGKCVHLVAQDEPGKPYYSCICDEFYIGERCG.

It belongs to the EGF domain peptide family. As to expression, expressed by the venom gland.

The protein resides in the secreted. In terms of biological role, ant peptide with probable defensive activity which acts as a potent agonist of the mammalian epidermal growth factor receptor (EGFR). Mimics, both structurally and functionally, vertebrate epidermal growth factor (EGF) peptide hormones. In vivo, intraplantar injection in mice causes long-lasting (several days) hypersensitivity of the injected paw to both mechanical and thermal stimuli. Its long-lasting effect is unusual for venom toxins whose effects are usually immediate. One possible explanation is that it would reduce the duration of a nest attack, discourage future attacks, or enhance the actions of subsequent exposure to other pain-inducing venom peptides. This chain is OMEGA-ectatommitoxin(02)-Rm1d, found in Rhytidoponera metallica (Australian green-headed ant).